A 338-amino-acid polypeptide reads, in one-letter code: MSDDARFQQLNCWLDSCLPELFVAEGWGEVPPAELIPASSDASFRRYFRWQGGDRSLVVMDAPPPQEDCRPFVKVAGLLAGAGVHVPRILAQDLENGFLLLSDLGRQTYLDVLHPGNADELFEPALDALIAFQKVDVAGVLPAYDEAVLRRELQLFPDWYLARHLGVELEGETLARWKRICDLLVRSALEQPRVFVHRDYMPRNLMLSEPNPGVLDFQDALHGPVTYDVTCLYKDAFVSWPEPRVHAALNRYWKKATWAGIPLPPSFEDFLRASDLMGVQRHLKVIGIFARICHRDGKPRYLGDVPRFFRYLETAVARRPELAELGELLASLPQGAEA.

Belongs to the kinase AmgK family.

It carries out the reaction N-acetyl-D-muramate + ATP = N-acetyl-alpha-D-muramate 1-phosphate + ADP + H(+). It catalyses the reaction N-acetyl-D-glucosamine + ATP = N-acetyl-alpha-D-glucosamine 1-phosphate + ADP + H(+). The protein operates within cell wall biogenesis; peptidoglycan recycling. In terms of biological role, sugar kinase that catalyzes the ATP-dependent phosphorylation of N-acetylmuramate (MurNAc) and N-acetylglucosamine (GlcNAc) at its C1 hydroxyl group, leading to MurNAc alpha-1P and GlcNAc alpha-1P, respectively. Is involved in peptidoglycan recycling as part of a cell wall recycling pathway that bypasses de novo biosynthesis of the peptidoglycan precursor UDP-MurNAc. Plays a role in intrinsic resistance to fosfomycin, which targets the de novo synthesis of UDP-MurNAc. The polypeptide is N-acetylmuramate/N-acetylglucosamine kinase (Pseudomonas aeruginosa (strain ATCC 15692 / DSM 22644 / CIP 104116 / JCM 14847 / LMG 12228 / 1C / PRS 101 / PAO1)).